A 734-amino-acid polypeptide reads, in one-letter code: Photosystem I P700 chlorophyll a apoprotein A2 (734 aa).

8 consecutive transmembrane segments (helical) span residues 46–69 (IFAS…FHVA), 135–158 (LYIG…LHLQ), 175–199 (LNHH…HVAI), 273–291 (IAHH…GHMY), 330–353 (LHFQ…QHMY), 369–395 (AALY…IFFI), 417–439 (AIIS…LYVH), and 517–535 (FLVH…LILV). Positions 559 and 568 each coordinate [4Fe-4S] cluster. 2 helical membrane passes run 575 to 596 (AFYL…YWHW) and 643 to 665 (LSVW…MFLI). The chlorophyll a site is built by His654, Met662, and Tyr670. Trp671 is a binding site for phylloquinone. Residues 707–727 (VVGLAHFSVGYVFTYAAFLIA) traverse the membrane as a helical segment.

It belongs to the PsaA/PsaB family. The PsaA/B heterodimer binds the P700 chlorophyll special pair and subsequent electron acceptors. PSI consists of a core antenna complex that captures photons, and an electron transfer chain that converts photonic excitation into a charge separation. The eukaryotic PSI reaction center is composed of at least 11 subunits. Requires P700 is a chlorophyll a/chlorophyll a' dimer, A0 is one or more chlorophyll a, A1 is one or both phylloquinones and FX is a shared 4Fe-4S iron-sulfur center. as cofactor.

It localises to the plastid. The protein resides in the chloroplast thylakoid membrane. The catalysed reaction is reduced [plastocyanin] + hnu + oxidized [2Fe-2S]-[ferredoxin] = oxidized [plastocyanin] + reduced [2Fe-2S]-[ferredoxin]. Its function is as follows. PsaA and PsaB bind P700, the primary electron donor of photosystem I (PSI), as well as the electron acceptors A0, A1 and FX. PSI is a plastocyanin-ferredoxin oxidoreductase, converting photonic excitation into a charge separation, which transfers an electron from the donor P700 chlorophyll pair to the spectroscopically characterized acceptors A0, A1, FX, FA and FB in turn. Oxidized P700 is reduced on the lumenal side of the thylakoid membrane by plastocyanin. The polypeptide is Photosystem I P700 chlorophyll a apoprotein A2 (Mesostigma viride (Green alga)).